We begin with the raw amino-acid sequence, 284 residues long: D-tagatose-1,6-bisphosphate aldolase subunit GatY (284 aa).

Residue Asp-82 is the Proton donor of the active site. The Zn(2+) site is built by His-83 and His-180. Gly-181 contacts dihydroxyacetone phosphate. His-208 is a Zn(2+) binding site. Residues 209-211 (GAS) and 230-233 (NVAT) each bind dihydroxyacetone phosphate.

Belongs to the class II fructose-bisphosphate aldolase family. TagBP aldolase GatY subfamily. As to quaternary structure, forms a complex with GatZ. Requires Zn(2+) as cofactor.

It carries out the reaction D-tagatofuranose 1,6-bisphosphate = D-glyceraldehyde 3-phosphate + dihydroxyacetone phosphate. Its pathway is carbohydrate metabolism; D-tagatose 6-phosphate degradation; D-glyceraldehyde 3-phosphate and glycerone phosphate from D-tagatose 6-phosphate: step 2/2. Functionally, catalytic subunit of the tagatose-1,6-bisphosphate aldolase GatYZ, which catalyzes the reversible aldol condensation of dihydroxyacetone phosphate (DHAP or glycerone-phosphate) with glyceraldehyde 3-phosphate (G3P) to produce tagatose 1,6-bisphosphate (TBP). Requires GatZ subunit for full activity and stability. Is involved in the catabolism of galactitol. This chain is D-tagatose-1,6-bisphosphate aldolase subunit GatY, found in Salmonella newport (strain SL254).